Here is an 87-residue protein sequence, read N- to C-terminus: Citrate lyase acyl carrier protein (87 aa).

An O-(phosphoribosyl dephospho-coenzyme A)serine modification is found at serine 14.

This sequence belongs to the CitD family. In terms of assembly, oligomer with a subunit composition of (alpha,beta,gamma)6.

Its subcellular location is the cytoplasm. Covalent carrier of the coenzyme of citrate lyase. The sequence is that of Citrate lyase acyl carrier protein from Treponema denticola (strain ATCC 35405 / DSM 14222 / CIP 103919 / JCM 8153 / KCTC 15104).